The following is a 322-amino-acid chain: NADH-quinone oxidoreductase subunit H (322 aa).

The next 8 helical transmembrane spans lie at 15–35 (ILHI…LSIL), 82–102 (IFIL…PTIP), 114–134 (IGIL…LFAG), 149–169 (ASAQ…GVIA), 186–206 (VWNV…GIAL), 243–263 (ISII…YFGF), 265–285 (GSSF…FILI), and 302–322 (WKIC…FILI).

The protein belongs to the complex I subunit 1 family. As to quaternary structure, NDH-1 is composed of 13 different subunits. Subunits NuoA, H, J, K, L, M, N constitute the membrane sector of the complex.

It localises to the cell membrane. The catalysed reaction is a quinone + NADH + 5 H(+)(in) = a quinol + NAD(+) + 4 H(+)(out). Its function is as follows. NDH-1 shuttles electrons from NADH, via FMN and iron-sulfur (Fe-S) centers, to quinones in the respiratory chain. The immediate electron acceptor for the enzyme in this species is believed to be ubiquinone. Couples the redox reaction to proton translocation (for every two electrons transferred, four hydrogen ions are translocated across the cytoplasmic membrane), and thus conserves the redox energy in a proton gradient. This subunit may bind ubiquinone. This Buchnera aphidicola subsp. Schizaphis graminum (strain Sg) protein is NADH-quinone oxidoreductase subunit H.